Here is a 473-residue protein sequence, read N- to C-terminus: Putative tyrosine recombinase XerC (473 aa).

Positions 4 to 82 (MTLPELTQEY…HLRTVYRYAM (79 aa)) constitute a Core-binding (CB) domain. A Tyr recombinase domain is found at 118-305 (RNWLRFLVQE…DYDLMREVMN (188 aa)). Active-site residues include Arg156, Lys183, His256, Arg259, and His283. Tyr292 acts as the O-(3'-phospho-DNA)-tyrosine intermediate in catalysis. Residues 341–352 (SGTELQPATTES) are compositionally biased toward polar residues. The segment at 341–365 (SGTELQPATTESSEAKKADDTASNP) is disordered.

The protein belongs to the 'phage' integrase family.

It is found in the cytoplasm. Site-specific tyrosine recombinase, which acts by catalyzing the cutting and rejoining of the recombining DNA molecules. This chain is Putative tyrosine recombinase XerC, found in Pseudomonas syringae.